Here is a 411-residue protein sequence, read N- to C-terminus: 2,3-bisphosphoglycerate-independent phosphoglycerate mutase (411 aa).

The protein belongs to the BPG-independent phosphoglycerate mutase family. A-PGAM subfamily.

It carries out the reaction (2R)-2-phosphoglycerate = (2R)-3-phosphoglycerate. The protein operates within carbohydrate degradation; glycolysis; pyruvate from D-glyceraldehyde 3-phosphate: step 3/5. In terms of biological role, catalyzes the interconversion of 2-phosphoglycerate and 3-phosphoglycerate. This is 2,3-bisphosphoglycerate-independent phosphoglycerate mutase from Pyrobaculum arsenaticum (strain DSM 13514 / JCM 11321 / PZ6).